Consider the following 68-residue polypeptide: Small ribosomal subunit protein bS21 (68 aa).

The tract at residues 35-68 is disordered; the sequence is HYEKPSEKRARERAAAVRRARKMERKRMERDGIK. The span at 37 to 49 shows a compositional bias: basic and acidic residues; sequence EKPSEKRARERAA. Positions 50 to 59 are enriched in basic residues; the sequence is AVRRARKMER.

Belongs to the bacterial ribosomal protein bS21 family.

The chain is Small ribosomal subunit protein bS21 from Sphingopyxis alaskensis (strain DSM 13593 / LMG 18877 / RB2256) (Sphingomonas alaskensis).